A 201-amino-acid chain; its full sequence is Small ribosomal subunit protein uS4 (201 aa).

Residues 91–151 enclose the S4 RNA-binding domain; sequence SRLDNVVYRA…EKSQKMNWFE (61 aa).

The protein belongs to the universal ribosomal protein uS4 family. In terms of assembly, part of the 30S ribosomal subunit. Contacts protein S5. The interaction surface between S4 and S5 is involved in control of translational fidelity.

In terms of biological role, one of the primary rRNA binding proteins, it binds directly to 16S rRNA where it nucleates assembly of the body of the 30S subunit. With S5 and S12 plays an important role in translational accuracy. This chain is Small ribosomal subunit protein uS4, found in Corynebacterium efficiens (strain DSM 44549 / YS-314 / AJ 12310 / JCM 11189 / NBRC 100395).